Reading from the N-terminus, the 341-residue chain is UDP-3-O-acylglucosamine N-acyltransferase (341 aa).

His-242 serves as the catalytic Proton acceptor.

It belongs to the transferase hexapeptide repeat family. LpxD subfamily. Homotrimer.

It catalyses the reaction a UDP-3-O-[(3R)-3-hydroxyacyl]-alpha-D-glucosamine + a (3R)-hydroxyacyl-[ACP] = a UDP-2-N,3-O-bis[(3R)-3-hydroxyacyl]-alpha-D-glucosamine + holo-[ACP] + H(+). The protein operates within bacterial outer membrane biogenesis; LPS lipid A biosynthesis. In terms of biological role, catalyzes the N-acylation of UDP-3-O-acylglucosamine using 3-hydroxyacyl-ACP as the acyl donor. Is involved in the biosynthesis of lipid A, a phosphorylated glycolipid that anchors the lipopolysaccharide to the outer membrane of the cell. The polypeptide is UDP-3-O-acylglucosamine N-acyltransferase (Haemophilus influenzae (strain 86-028NP)).